The sequence spans 330 residues: Free fatty acid receptor 2 (330 aa).

The Extracellular segment spans residues 1–8; the sequence is MTPDWHSS. Residues 9 to 29 form a helical membrane-spanning segment; the sequence is LILTAYILIFLTGLPANLLAL. Over 30–43 the chain is Cytoplasmic; it reads RAFMGRVRQPQPAP. The chain crosses the membrane as a helical span at residues 44 to 64; it reads VHILLLNLTLADLLLLLLLPF. Topologically, residues 65 to 79 are extracellular; sequence RIVEAASNFRWYLPK. Residues 80 to 100 form a helical membrane-spanning segment; sequence IVCALTGFGFYSSIYCSTWLL. Topologically, residues 101 to 126 are cytoplasmic; it reads AGISMERYLGVAFPVQYKLSRRPLYG. The helical transmembrane segment at 127–147 threads the bilayer; that stretch reads VIAALVAWIMSFGHCTIVIIV. At 148-184 the chain is on the extracellular side; that stretch reads QYLNSTEQVGTENQITCYENFTQEQLDVVLPVRLELC. Residues N151 and N167 are each glycosylated (N-linked (GlcNAc...) asparagine). Residues 185–205 form a helical membrane-spanning segment; that stretch reads LVLFFVPMAVTIFCYWRFVWI. Residues 206 to 219 lie on the Cytoplasmic side of the membrane; it reads MLTQPHVGAQRRRR. Residues 220–240 traverse the membrane as a helical segment; the sequence is AVGLAVVTLLNFLVCFGPYNM. The Extracellular segment spans residues 241-255; that stretch reads SHLVGFYLRQSPSWR. Residues 256 to 276 traverse the membrane as a helical segment; it reads VEAVVFSSLNASLDPLLFYFS. Residues 277–330 are Cytoplasmic-facing; it reads SSVVRRAFGKGLLLIRNPASSMLGRGAKETVEGTKMDRGGSQAEGVQSSEFVTE. Positions 306–330 are disordered; the sequence is TVEGTKMDRGGSQAEGVQSSEFVTE. Over residues 320–330 the composition is skewed to polar residues; it reads EGVQSSEFVTE.

It belongs to the G-protein coupled receptor 1 family. As to quaternary structure, interacts with FCN1 (via Fibrinogen C-terminal domain). In terms of tissue distribution, highly expressed in hematopoietic tissues, such as spleen and bone marrow, with highest levels in a subset of immune cells, including monocytes or neutrophils. Expressed in adipose tissues with high expression in differentiating adipocytes. Expressed by intestinal endocrine cells.

It is found in the cell membrane. In terms of biological role, g protein-coupled receptor that is activated by a major product of dietary fiber digestion, the short chain fatty acids (SCFAs), and that plays a role in the regulation of whole-body energy homeostasis and in intestinal immunity. In omnivorous mammals, the short chain fatty acids acetate, propionate and butyrate are produced primarily by the gut microbiome that metabolizes dietary fibers. SCFAs serve as a source of energy but also act as signaling molecules. That G protein-coupled receptor is probably coupled to the pertussis toxin-sensitive, G(i/o)-alpha family of G proteins but also to the Gq family. Its activation results in the formation of inositol 1,4,5-trisphosphate, the mobilization of intracellular calcium, the phosphorylation of the MAPK3/ERK1 and MAPK1/ERK2 kinases and the inhibition of intracellular cAMP accumulation. May play a role in glucose homeostasis by regulating the secretion of GLP-1, in response to short-chain fatty acids accumulating in the intestine. May also regulate the production of LEP/Leptin, a hormone acting on the central nervous system to inhibit food intake. Finally, may also regulate whole-body energy homeostasis through adipogenesis regulating both differentiation and lipid storage of adipocytes. In parallel to its role in energy homeostasis, may also mediate the activation of the inflammatory and immune responses by SCFA in the intestine, regulating the rapid production of chemokines and cytokines. May also play a role in the resolution of the inflammatory response and control chemotaxis in neutrophils. In addition to SCFAs, may also be activated by the extracellular lectin FCN1 in a process leading to activation of monocytes and inducing the secretion of interleukin-8/IL-8 in response to the presence of microbes. In Mus musculus (Mouse), this protein is Free fatty acid receptor 2 (Ffar2).